The chain runs to 460 residues: MFISILLLALAVERILCANILCVFPTPAYSHQSVFSAYIDKLSWAGHNVTVITPMPRAVDHVHQVVSSLSVHYFNNLIKNSTMIKKRGVVADETTVTKENYMGLINLVAHEIKSPNVTRLLRNKGNKFDLIVCEAYVSYILVFGAIYDAPVIQFSSGYAIPENFETVGGEVARNHIKHPNIWRSDFSKSNFEQLMTENYLKNEWALLEKEQENMLKRDFGYHHDMCQLKSRVLMLFINVPAVFDNNRDVSNNIQYLGGIHLKKPRTVRDSRLLSFMEKHHIIVYASFGSGIDVLNMDANLIAEFVRVFNSIPYAVLWKVDSSIHLKHNISSNVHTQSWFPQRDVLNHPHIKVFITQGGVQSTDEAVNSGVPMIGIPIMGDQFYNVRRYTELGIGEKVNILRLEEEGLDRKIKNLVHNKSYELNIKRLNLFISDTPVKPLRKALWFTNYVLRNKDAIDKFK.

An N-terminal signal peptide occupies residues 1–18 (MFISILLLALAVERILCA).

It belongs to the UDP-glycosyltransferase family.

Its function is as follows. Catalyzes the transfer of glucose from UDP-glucose to ecdysteroids which are insect molting hormones. Expression of egt interferes with normal insect development and block molting. The polypeptide is Ecdysteroid UDP-glucosyltransferase (EGT) (Lacanobia oleracea granulosis virus (LoGV)).